The following is a 428-amino-acid chain: 3-phosphoshikimate 1-carboxyvinyltransferase (428 aa).

Positions 22, 23, and 27 each coordinate 3-phosphoshikimate. Position 22 (K22) interacts with phosphoenolpyruvate. Residues G94 and R122 each contribute to the phosphoenolpyruvate site. S168, S169, Q170, S196, D315, and K342 together coordinate 3-phosphoshikimate. Q170 lines the phosphoenolpyruvate pocket. Residue D315 is the Proton acceptor of the active site. Phosphoenolpyruvate-binding residues include R346, R389, and K414.

This sequence belongs to the EPSP synthase family. Monomer.

The protein localises to the cytoplasm. The catalysed reaction is 3-phosphoshikimate + phosphoenolpyruvate = 5-O-(1-carboxyvinyl)-3-phosphoshikimate + phosphate. It functions in the pathway metabolic intermediate biosynthesis; chorismate biosynthesis; chorismate from D-erythrose 4-phosphate and phosphoenolpyruvate: step 6/7. In terms of biological role, catalyzes the transfer of the enolpyruvyl moiety of phosphoenolpyruvate (PEP) to the 5-hydroxyl of shikimate-3-phosphate (S3P) to produce enolpyruvyl shikimate-3-phosphate and inorganic phosphate. This Thiobacillus denitrificans (strain ATCC 25259 / T1) protein is 3-phosphoshikimate 1-carboxyvinyltransferase.